The chain runs to 169 residues: Der GTPase-activating protein YihI (169 aa).

Disordered stretches follow at residues 1-98 (MKPS…PQAE) and 144-169 (GLSYDDDEEEEEDEKQEDMMRLLRGN). Basic residues predominate over residues 10-19 (SKGHAKARRK). Over residues 20–30 (TREELDQEARD) the composition is skewed to basic and acidic residues. Positions 31 to 40 (RKRQKKRRGH) are enriched in basic residues. Positions 49–58 (GNTTSGSKGQ) are enriched in polar residues. Residues 147–159 (YDDDEEEEEDEKQ) show a composition bias toward acidic residues. Positions 160-169 (EDMMRLLRGN) are enriched in basic and acidic residues.

The protein belongs to the YihI family. As to quaternary structure, interacts with Der.

A GTPase-activating protein (GAP) that modifies Der/EngA GTPase function. May play a role in ribosome biogenesis. In Escherichia coli O139:H28 (strain E24377A / ETEC), this protein is Der GTPase-activating protein YihI.